The following is a 190-amino-acid chain: Xanthine phosphoribosyltransferase (190 aa).

Residues Leu-20 and Asn-27 each coordinate xanthine. 128-132 (ANGNA) is a binding site for 5-phospho-alpha-D-ribose 1-diphosphate. A xanthine-binding site is contributed by Lys-156.

It belongs to the purine/pyrimidine phosphoribosyltransferase family. Xpt subfamily. Homodimer.

The protein localises to the cytoplasm. The enzyme catalyses XMP + diphosphate = xanthine + 5-phospho-alpha-D-ribose 1-diphosphate. It participates in purine metabolism; XMP biosynthesis via salvage pathway; XMP from xanthine: step 1/1. Functionally, converts the preformed base xanthine, a product of nucleic acid breakdown, to xanthosine 5'-monophosphate (XMP), so it can be reused for RNA or DNA synthesis. The protein is Xanthine phosphoribosyltransferase of Clostridium novyi (strain NT).